The chain runs to 380 residues: Methylthioribose-1-phosphate isomerase (380 aa).

Asp-257 acts as the Proton donor in catalysis.

This sequence belongs to the eIF-2B alpha/beta/delta subunits family. MtnA subfamily.

The protein resides in the cytoplasm. The protein localises to the nucleus. The enzyme catalyses 5-(methylsulfanyl)-alpha-D-ribose 1-phosphate = 5-(methylsulfanyl)-D-ribulose 1-phosphate. It functions in the pathway amino-acid biosynthesis; L-methionine biosynthesis via salvage pathway; L-methionine from S-methyl-5-thio-alpha-D-ribose 1-phosphate: step 1/6. Catalyzes the interconversion of methylthioribose-1-phosphate (MTR-1-P) into methylthioribulose-1-phosphate (MTRu-1-P). This Naegleria gruberi (Amoeba) protein is Methylthioribose-1-phosphate isomerase.